Reading from the N-terminus, the 407-residue chain is MARKKIREYDSKRLLKEHLKRLAGIDLQILSAQVTQSTDFTELVNQQPWLSTMKLVVKPDMLFGKRGKSGLVALNLDIAQVKEFVKERLGVEVEMGGCKAPITTFIVEPFVPHDQEYYLSIVSERLGSTISFSECGGIEIEENWDKVKTIFLSTEKPMTPDACAPLIATLPLEARGKIGDFIKGVFAVFQDLDFSFLEMNPFTIVNGEPYPLDMRGELDDTAAFKTSRSKWGNIEFPLPFGRVLSSTEGFIHDLDEKTSASLKFTVLNPKGRIWTMVAGGELENYAEYSGAPNEEEVLQYARVVLDCATADPDGRKRALLIGGGIANFTDVGATFSGIIRALREKESKLKAARMHIYVRRGGPNYQTGLAKMRKLGAELGVPIEVYGPEATMTGICKQAIECVMAAA.

N327, T329, and R360 together coordinate citrate.

It belongs to the succinate/malate CoA ligase beta subunit family. As to quaternary structure, heterooctamer of 4 alpha and 4 beta chains.

The protein localises to the cytoplasm. It localises to the cytosol. The catalysed reaction is oxaloacetate + acetyl-CoA + ADP + phosphate = citrate + ATP + CoA. Its function is as follows. ATP citrate-lyase is the primary enzyme responsible for the synthesis of cytosolic acetyl-CoA, used for the elongation of fatty acids and biosynthesis of isoprenoids, flavonoids and malonated derivatives. May supply substrate to the cytosolic acetyl-CoA carboxylase, which generates the malonyl-CoA used for the synthesis of a multitude of compounds, including very long chain fatty acids and flavonoids. In contrast to all known animal ACL enzymes having a homomeric structure, plant ACLs are composed of alpha and beta chains. This chain is ATP-citrate synthase subunit alpha chain protein 1 (ACLA-1), found in Oryza sativa subsp. japonica (Rice).